We begin with the raw amino-acid sequence, 64 residues long: Large ribosomal subunit protein bL35 (64 aa).

A compositionally biased stretch (basic residues) spans 1–42 (MPKAKTHSGASKRFRRTGTGKIVRQKANRRHLLEHKPTKRTR). The segment at 1–64 (MPKAKTHSGA…NSRINKLLNG (64 aa)) is disordered. The span at 48 to 58 (TTVSAADNSRI) shows a compositional bias: polar residues.

It belongs to the bacterial ribosomal protein bL35 family.

This chain is Large ribosomal subunit protein bL35, found in Mycolicibacterium smegmatis (strain ATCC 700084 / mc(2)155) (Mycobacterium smegmatis).